The primary structure comprises 291 residues: Kidney mitochondrial carrier protein 1 (291 aa).

3 Solcar repeats span residues 7 to 96 (KPFI…LKRL), 104 to 189 (ETLV…TKKH), and 198 to 289 (DTVY…LKKL). Helical transmembrane passes span 9–26 (FIYGGLASITAECGTFPI), 71–89 (GIAPAMLRQASYGTIKIGT), 106–124 (LVLNAFCGVLSGVVSSCIA), 164–183 (GVSLTAQRAAIVVGVELPVY), 204–224 (FLSSFTCGLAGALASNPVDVV), and 264–283 (GFWPNWLRLGPWNIIFFITY).

This sequence belongs to the mitochondrial carrier (TC 2.A.29) family.

The protein resides in the mitochondrion inner membrane. The enzyme catalyses sulfite(in) + sulfate(out) = sulfite(out) + sulfate(in). It catalyses the reaction thiosulfate(in) + sulfate(out) = thiosulfate(out) + sulfate(in). The catalysed reaction is sulfate(out) + phosphate(in) = sulfate(in) + phosphate(out). It carries out the reaction oxalate(in) + sulfate(out) = oxalate(out) + sulfate(in). The enzyme catalyses malonate(in) + sulfate(out) = malonate(out) + sulfate(in). It catalyses the reaction maleate(in) + sulfate(out) = maleate(out) + sulfate(in). The catalysed reaction is (S)-malate(in) + sulfate(out) = (S)-malate(out) + sulfate(in). It carries out the reaction (3S)-citramalate(in) + sulfate(out) = (3S)-citramalate(out) + sulfate(in). The enzyme catalyses (3R)-citramalate(in) + sulfate(out) = (3R)-citramalate(out) + sulfate(in). It catalyses the reaction sulfate(out) + succinate(in) = sulfate(in) + succinate(out). The catalysed reaction is (S,S)-tartrate(in) + sulfate(out) = (S,S)-tartrate(out) + sulfate(in). It carries out the reaction (2R,3R)-tartrate(in) + sulfate(out) = (2R,3R)-tartrate(out) + sulfate(in). The enzyme catalyses D-aspartate(in) + sulfate(out) = D-aspartate(out) + sulfate(in). It catalyses the reaction L-aspartate(in) + sulfate(out) = L-aspartate(out) + sulfate(in). The catalysed reaction is sulfate(in) = sulfate(out). It carries out the reaction phosphate(in) = phosphate(out). The enzyme catalyses (S)-malate(out) = (S)-malate(in). Probable transporter. In terms of biological role, antiporter that transports inorganic anions (sulfate, sulfite, thiosulfate and phosphate) and, to a lesser extent, a variety of dicarboxylates (e.g. malonate, malate and citramalate) and, even more so, aspartate. The sulfate/sulfate exchange is much higher than the phosphate/phosphate and malate/malate exchanges. The transport affinities is higher for sulfate and thiosulfate than for any other substrate. May catalyze the export of sulfite and thiosulfate (the hydrogen sulfide degradation products) from the mitochondria, thereby modulating the level of the hydrogen sulfide. Also may mediate a very low unidirectional transport of sulfate, phosphate and (S)-malate. The protein is Kidney mitochondrial carrier protein 1 of Xenopus laevis (African clawed frog).